The sequence spans 1931 residues: Chitin synthase 5 (1931 aa).

One can recognise a Myosin motor domain in the interval 11–777; it reads LGVTDLSSLA…LFRFLEDRLR (767 aa). 122–129 serves as a coordination point for ATP; it reads GPTGSGKS. Residues Asn510, Asn538, and Asn676 are each glycosylated (N-linked (GlcNAc...) asparagine). An actin-binding region spans residues 655 to 677; it reads VDSLLKSFDQTQTWYIFALRPND. A disordered region spans residues 798–817; sequence DPFSPHRYQPTSFDSQDHVY. The N-linked (GlcNAc...) asparagine glycan is linked to Asn842. 2 consecutive transmembrane segments (helical) span residues 912 to 932 and 951 to 971; these read WVWL…SKIA and MIIW…GPVI. Asn1062, Asn1078, and Asn1146 each carry an N-linked (GlcNAc...) asparagine glycan. A helical membrane pass occupies residues 1220–1240; that stretch reads ILLALSCVMVAVIGFKFLSAL. Asn1583 is a glycosylation site (N-linked (GlcNAc...) asparagine). The next 3 helical transmembrane spans lie at 1615–1635, 1641–1661, and 1668–1688; these read LSTI…YLIV, IPTL…MIFI, and MIAW…LLPL. The tract at residues 1826 to 1847 is disordered; that stretch reads AHRPSLDDTSSFHQPYQPAPRP. The 56-residue stretch at 1875–1930 folds into the DEK-C domain; it reads AITDSQLERSIRKICANAELDKLTKKGVRKELEREYGVELTERREAINRLVEKVLT.

The protein in the N-terminal section; belongs to the TRAFAC class CC myosin-kinesin ATPase superfamily. Myosin family. In the C-terminal section; belongs to the chitin synthase family. Class V subfamily.

It localises to the cell membrane. Its subcellular location is the cell septum. It is found in the cell tip. It carries out the reaction [(1-&gt;4)-N-acetyl-beta-D-glucosaminyl](n) + UDP-N-acetyl-alpha-D-glucosamine = [(1-&gt;4)-N-acetyl-beta-D-glucosaminyl](n+1) + UDP + H(+). Functionally, polymerizes chitin, a structural polymer of the cell wall and septum, by transferring the sugar moiety of UDP-GlcNAc to the non-reducing end of the growing chitin polymer. Produces a large proportion of the chitin that is not deacetylated to chitosan. The polypeptide is Chitin synthase 5 (Cryptococcus neoformans var. grubii serotype A (strain H99 / ATCC 208821 / CBS 10515 / FGSC 9487) (Filobasidiella neoformans var. grubii)).